The primary structure comprises 131 residues: UPF0102 protein RPD_0400 (131 aa).

This sequence belongs to the UPF0102 family.

The polypeptide is UPF0102 protein RPD_0400 (Rhodopseudomonas palustris (strain BisB5)).